The primary structure comprises 55 residues: MEYMKRVEYLYRSVMSYRTQLDIQLLRFELSGECLIDISKRWTIKPLSRFTQRGE.

The protein localises to the plastid. This is an uncharacterized protein from Cuscuta reflexa (Southern Asian dodder).